The chain runs to 142 residues: Large ribosomal subunit protein uL13 (142 aa).

It belongs to the universal ribosomal protein uL13 family. As to quaternary structure, part of the 50S ribosomal subunit.

Functionally, this protein is one of the early assembly proteins of the 50S ribosomal subunit, although it is not seen to bind rRNA by itself. It is important during the early stages of 50S assembly. The polypeptide is Large ribosomal subunit protein uL13 (Shewanella putrefaciens (strain CN-32 / ATCC BAA-453)).